The sequence spans 259 residues: UPF0246 protein VSAL_I2547 (259 aa).

It belongs to the UPF0246 family.

In Aliivibrio salmonicida (strain LFI1238) (Vibrio salmonicida (strain LFI1238)), this protein is UPF0246 protein VSAL_I2547.